The following is a 39-amino-acid chain: Potassium channel toxin alpha-KTx 2.17 (39 aa).

3 disulfide bridges follow: Cys-7–Cys-29, Cys-13–Cys-34, and Cys-17–Cys-36. Position 39 is an isoleucine amide (Ile-39).

This sequence belongs to the short scorpion toxin superfamily. Potassium channel inhibitor family. Alpha-KTx 02 subfamily. In terms of tissue distribution, expressed by the venom gland.

The protein resides in the secreted. Blocks human voltage-gated potassium channels Kv1.1/KCNA1 (IC(50)=4.8 nM) and Kv1.2/KCNA2 (IC(50)=2.9 nM). In Centruroides tecomanus (Scorpion), this protein is Potassium channel toxin alpha-KTx 2.17.